The chain runs to 222 residues: Probable pyridoxal 5'-phosphate synthase subunit SNO2 (222 aa).

58 to 60 (GES) lines the L-glutamine pocket. Cys-91 serves as the catalytic Nucleophile. L-glutamine-binding positions include Arg-120 and 151–152 (IR). Catalysis depends on charge relay system residues His-197 and Glu-199.

It belongs to the glutaminase PdxT/SNO family.

The catalysed reaction is aldehydo-D-ribose 5-phosphate + D-glyceraldehyde 3-phosphate + L-glutamine = pyridoxal 5'-phosphate + L-glutamate + phosphate + 3 H2O + H(+). It catalyses the reaction L-glutamine + H2O = L-glutamate + NH4(+). It participates in cofactor biosynthesis; pyridoxal 5'-phosphate biosynthesis. In terms of biological role, catalyzes the hydrolysis of glutamine to glutamate and ammonia as part of the biosynthesis of pyridoxal 5'-phosphate. The resulting ammonia molecule is channeled to the active site of a SNZ isoform. The polypeptide is Probable pyridoxal 5'-phosphate synthase subunit SNO2 (SNO2) (Saccharomyces cerevisiae (strain ATCC 204508 / S288c) (Baker's yeast)).